A 336-amino-acid polypeptide reads, in one-letter code: Protein FPV127 (336 aa).

Residues 1-22 (MGGGLVLPTRDPPKEQDTSETA) are disordered.

The protein belongs to the poxviruses A16/G9/J5 family.

This Vertebrata (FPV) protein is Protein FPV127.